The sequence spans 316 residues: Transaldolase (316 aa).

Lys132 serves as the catalytic Schiff-base intermediate with substrate.

The protein belongs to the transaldolase family. Type 1 subfamily. In terms of assembly, homodimer.

Its subcellular location is the cytoplasm. It carries out the reaction D-sedoheptulose 7-phosphate + D-glyceraldehyde 3-phosphate = D-erythrose 4-phosphate + beta-D-fructose 6-phosphate. It participates in carbohydrate degradation; pentose phosphate pathway; D-glyceraldehyde 3-phosphate and beta-D-fructose 6-phosphate from D-ribose 5-phosphate and D-xylulose 5-phosphate (non-oxidative stage): step 2/3. Its function is as follows. Transaldolase is important for the balance of metabolites in the pentose-phosphate pathway. This is Transaldolase from Vibrio vulnificus (strain YJ016).